The primary structure comprises 169 residues: Peptide methionine sulfoxide reductase MsrA (169 aa).

Cysteine 10 is an active-site residue.

Belongs to the MsrA Met sulfoxide reductase family.

The enzyme catalyses L-methionyl-[protein] + [thioredoxin]-disulfide + H2O = L-methionyl-(S)-S-oxide-[protein] + [thioredoxin]-dithiol. It catalyses the reaction [thioredoxin]-disulfide + L-methionine + H2O = L-methionine (S)-S-oxide + [thioredoxin]-dithiol. Functionally, has an important function as a repair enzyme for proteins that have been inactivated by oxidation. Catalyzes the reversible oxidation-reduction of methionine sulfoxide in proteins to methionine. This Streptococcus pyogenes serotype M1 protein is Peptide methionine sulfoxide reductase MsrA.